Here is a 609-residue protein sequence, read N- to C-terminus: Ovochymase-2 (609 aa).

The signal sequence occupies residues 1-22 (MPISKDKLILILGMVCLEQGHS). Positions 23–51 (ETLSSIRNPDCGQSLVKPQPQNYFSLFSR) are cleaved as a propeptide — activation peptide. Positions 52–299 (IVGGSQVEKG…VLPWILKHIQ (248 aa)) constitute a Peptidase S1 domain. A disulfide bridge links cysteine 77 with cysteine 93. The active-site Charge relay system is the histidine 92. N-linked (GlcNAc...) asparagine glycosylation is present at asparagine 104. A Ca(2+)-binding site is contributed by glutamate 119. Catalysis depends on aspartate 142, which acts as the Charge relay system. Intrachain disulfides connect cysteine 176/cysteine 246, cysteine 207/cysteine 225, cysteine 236/cysteine 265, and cysteine 311/cysteine 341. Serine 240 serves as the catalytic Charge relay system. 2 CUB domains span residues 311-421 (CSEP…YKAL) and 431-543 (CRSL…ISFI). The N-linked (GlcNAc...) asparagine glycan is linked to asparagine 356. A disulfide bridge links cysteine 365 with cysteine 384. Asparagine 415 carries N-linked (GlcNAc...) asparagine glycosylation. Cystine bridges form between cysteine 431–cysteine 458 and cysteine 485–cysteine 506. 2 N-linked (GlcNAc...) asparagine glycosylation sites follow: asparagine 530 and asparagine 549. The segment at 580 to 609 (HTKPPYEEDIGEMPAIDSGLLKQGERRGKH) is disordered.

Belongs to the peptidase S1 family. In terms of tissue distribution, only expressed in uterus tissue. Expressed in the initial segment (IS) of the caput epididymis, the region most proximal to the testis.

Its subcellular location is the secreted. Functionally, may be required for sperm ADAM3 processing and consequential sperm fertilizing ability. In vitro, has an endopeptidase activity. The sequence is that of Ovochymase-2 from Mus musculus (Mouse).